The following is a 378-amino-acid chain: Ribosomal RNA large subunit methyltransferase G (378 aa).

It belongs to the methyltransferase superfamily. RlmG family.

The protein localises to the cytoplasm. It carries out the reaction guanosine(1835) in 23S rRNA + S-adenosyl-L-methionine = N(2)-methylguanosine(1835) in 23S rRNA + S-adenosyl-L-homocysteine + H(+). In terms of biological role, specifically methylates the guanine in position 1835 (m2G1835) of 23S rRNA. The polypeptide is Ribosomal RNA large subunit methyltransferase G (Shewanella putrefaciens (strain CN-32 / ATCC BAA-453)).